A 375-amino-acid polypeptide reads, in one-letter code: MSCPVIELTQQLIRRPSLSPDDAGCQALLIERLQAIGFTVERMDFADTQNFWAWRGQGETLAFAGHTDVVPPGDADRWINPPFEPTIRDGMLFGRGAADMKGSLAAMVVAAERFVAQHPNHTGRLAFLITSDEEASAHNGTVKVVEALMARNERLDYCLVGEPSSIEVVGDVVKNGRRGSLTCNLTIHGVQGHVAYPHLADNPVHRAAPFINELVAIEWDQGNEFFPATSMQIANIQAGTGSNNVIPGELFVQFNFRFSTELTDEMIKEQVLALLEKHQLRYTVDWWLSGQPFLTARGKLVDAVVNAVEHYNEIKPQLLTTGGTSDGRFIARMGAQVVELGPVNATIHKINECVNAADLQLLARMYQRIMEQLVA.

H66 is a binding site for Zn(2+). D68 is a catalytic residue. D99 is a binding site for Zn(2+). The active-site Proton acceptor is the E133. Positions 134, 162, and 348 each coordinate Zn(2+).

It belongs to the peptidase M20A family. DapE subfamily. As to quaternary structure, homodimer. The cofactor is Zn(2+). It depends on Co(2+) as a cofactor.

The catalysed reaction is N-succinyl-(2S,6S)-2,6-diaminopimelate + H2O = (2S,6S)-2,6-diaminopimelate + succinate. The protein operates within amino-acid biosynthesis; L-lysine biosynthesis via DAP pathway; LL-2,6-diaminopimelate from (S)-tetrahydrodipicolinate (succinylase route): step 3/3. Catalyzes the hydrolysis of N-succinyl-L,L-diaminopimelic acid (SDAP), forming succinate and LL-2,6-diaminopimelate (DAP), an intermediate involved in the bacterial biosynthesis of lysine and meso-diaminopimelic acid, an essential component of bacterial cell walls. The polypeptide is Succinyl-diaminopimelate desuccinylase (Escherichia coli O6:K15:H31 (strain 536 / UPEC)).